Consider the following 207-residue polypeptide: Outer-membrane lipoprotein LolB (207 aa).

The signal sequence occupies residues 1–21; the sequence is MPLPDFRLIRLLPLAALVLTA. The N-palmitoyl cysteine moiety is linked to residue cysteine 22. A lipid anchor (S-diacylglycerol cysteine) is attached at cysteine 22.

It belongs to the LolB family. As to quaternary structure, monomer.

Its subcellular location is the cell outer membrane. Functionally, plays a critical role in the incorporation of lipoproteins in the outer membrane after they are released by the LolA protein. The chain is Outer-membrane lipoprotein LolB from Escherichia coli O127:H6 (strain E2348/69 / EPEC).